The chain runs to 197 residues: uncharacterized protein (197 aa).

The PfpI endopeptidase domain maps to 29–166; sequence DWSVHTVSLD…FTNLILEMID (138 aa). Cysteine 98 acts as the Nucleophile in catalysis.

This sequence belongs to the peptidase C56 family.

This is an uncharacterized protein from Bacillus subtilis (strain 168).